Reading from the N-terminus, the 508-residue chain is MGLPWYRVHTVVLNDPGRLLAVHIMHTALVSGWAGSMALYELAVFDPSDPVLDPMWRQGMFVIPFMTRLGITNSWGGWSITGGTVTNPGIWSYEGVAGAHIVFSGLCFLAAIWHWVYWDLEIFRDERTGKPSLDLPKIFGIHLFLSGLACFGFGAFHVTGLYGPGIWVSDPYGLTGKVQSVSPAWGVEGFDPFVPGGIASHHIAAGTLGILAGLFHLSVRPPQRLYKGLRMGNIETVLSSSIAAVFFAAFVVAGTMWYGSATTPIELFGPTRYQWDQGYFQQEIYRRVGAGLAENQSLAEAWSKIPEKLAFYDYIGNNPAKGGLFRAGSMDNGDGIAVGWLGHPIFRDKEGRELFVRRMPTFFETFPVVLVDGDGIVRADVPFRRAESKYSVEQVGVTVEFYGGELNGVSYSDPATVKKYARRAQLGEIFELDRATLKSDGVFRSSPRGWFTFGHASFALLFFFGHIWHGARTLFRDVFAGIDPDLDAQVEFGAFQKLGDPTTKRQVV.

Transmembrane regions (helical) follow at residues 21 to 36 (AVHIMHTALVSGWAGS), 101 to 115 (IVFSGLCFLAAIWHW), 140 to 156 (GIHLFLSGLACFGFGAF), 203 to 218 (IAAGTLGILAGLFHLS), 237 to 252 (VLSSSIAAVFFAAFVV), and 457 to 472 (SFALLFFFGHIWHGAR).

The protein belongs to the PsbB/PsbC family. PsbB subfamily. As to quaternary structure, PSII is composed of 1 copy each of membrane proteins PsbA, PsbB, PsbC, PsbD, PsbE, PsbF, PsbH, PsbI, PsbJ, PsbK, PsbL, PsbM, PsbT, PsbX, PsbY, PsbZ, Psb30/Ycf12, at least 3 peripheral proteins of the oxygen-evolving complex and a large number of cofactors. It forms dimeric complexes. Binds multiple chlorophylls. PSII binds additional chlorophylls, carotenoids and specific lipids. is required as a cofactor.

Its subcellular location is the plastid. It is found in the chloroplast thylakoid membrane. Its function is as follows. One of the components of the core complex of photosystem II (PSII). It binds chlorophyll and helps catalyze the primary light-induced photochemical processes of PSII. PSII is a light-driven water:plastoquinone oxidoreductase, using light energy to abstract electrons from H(2)O, generating O(2) and a proton gradient subsequently used for ATP formation. The chain is Photosystem II CP47 reaction center protein from Nandina domestica (Heavenly bamboo).